The primary structure comprises 111 residues: Large ribosomal subunit protein uL22 (111 aa).

The protein belongs to the universal ribosomal protein uL22 family. In terms of assembly, part of the 50S ribosomal subunit.

This protein binds specifically to 23S rRNA; its binding is stimulated by other ribosomal proteins, e.g. L4, L17, and L20. It is important during the early stages of 50S assembly. It makes multiple contacts with different domains of the 23S rRNA in the assembled 50S subunit and ribosome. Its function is as follows. The globular domain of the protein is located near the polypeptide exit tunnel on the outside of the subunit, while an extended beta-hairpin is found that lines the wall of the exit tunnel in the center of the 70S ribosome. The polypeptide is Large ribosomal subunit protein uL22 (Chlamydia caviae (strain ATCC VR-813 / DSM 19441 / 03DC25 / GPIC) (Chlamydophila caviae)).